The sequence spans 526 residues: Tyrosine-protein kinase transforming protein Src (526 aa).

A disordered region spans residues 1 to 57 (MGSSKSKPKDPSQRRCSLEPPDSTHHGGFPASQTPNKTAAPDTHRTPSRSFGTVATE). Gly2 carries N-myristoyl glycine; by host lipidation. The segment covering 7-25 (KPKDPSQRRCSLEPPDSTH) has biased composition (basic and acidic residues). In terms of domain architecture, SH3 spans 81 to 142 (GGVTTFVALY…PSNYVAPSDS (62 aa)). Positions 148-245 (WYFGKITRRE…GLCHRLTNVC (98 aa)) constitute an SH2 domain. The Protein kinase domain maps to 267-517 (LRLEVKLGQG…TFEYLQAQLL (251 aa)). ATP-binding positions include 273 to 281 (LGQGCFGEV) and Lys295. Asp386 functions as the Proton acceptor in the catalytic mechanism. Tyr416 carries the phosphotyrosine; by autocatalysis modification.

Belongs to the protein kinase superfamily. Tyr protein kinase family. SRC subfamily. In terms of processing, the phosphorylated form is termed pp60v-src.

The catalysed reaction is L-tyrosyl-[protein] + ATP = O-phospho-L-tyrosyl-[protein] + ADP + H(+). This phosphoprotein, required for both the initiation and the maintenance of neoplastic transformation, is a protein kinase that catalyzes the phosphorylation of tyrosine residues in vitro. This is Tyrosine-protein kinase transforming protein Src (V-SRC) from Galliformes.